The following is a 316-amino-acid chain: Uracil-DNA glycosylase (316 aa).

Residues 36-79 (AAAAAPAGAGAGASKPARPSAAARPAKGTPAASAATTATGADAS) show a composition bias toward low complexity. Residues 36 to 91 (AAAAAPAGAGAGASKPARPSAAARPAKGTPAASAATTATGADASAPPPDPGAPTWD) form a disordered region. Catalysis depends on D159, which acts as the Proton acceptor.

This sequence belongs to the uracil-DNA glycosylase (UDG) superfamily. UNG family.

It localises to the host nucleus. It carries out the reaction Hydrolyzes single-stranded DNA or mismatched double-stranded DNA and polynucleotides, releasing free uracil.. In terms of biological role, excises uracil residues from the DNA which can arise as a result of misincorporation of dUMP residues by DNA polymerase or deamination of cytosines. Therefore may reduce deleterious uracil incorporation into the viral genome, particularly in terminally differentiated cells which lack DNA repair enzymes. The polypeptide is Uracil-DNA glycosylase (UL2) (Sus scrofa (Pig)).